Here is a 183-residue protein sequence, read N- to C-terminus: Nucleoside triphosphate pyrophosphatase (183 aa).

The active-site Proton acceptor is Asp71.

This sequence belongs to the Maf family. The cofactor is a divalent metal cation.

It is found in the cytoplasm. It catalyses the reaction a ribonucleoside 5'-triphosphate + H2O = a ribonucleoside 5'-phosphate + diphosphate + H(+). The enzyme catalyses a 2'-deoxyribonucleoside 5'-triphosphate + H2O = a 2'-deoxyribonucleoside 5'-phosphate + diphosphate + H(+). Nucleoside triphosphate pyrophosphatase. May have a dual role in cell division arrest and in preventing the incorporation of modified nucleotides into cellular nucleic acids. This is Nucleoside triphosphate pyrophosphatase from Campylobacter jejuni subsp. jejuni serotype O:2 (strain ATCC 700819 / NCTC 11168).